Here is a 242-residue protein sequence, read N- to C-terminus: 1-(5-phosphoribosyl)-5-[(5-phosphoribosylamino)methylideneamino] imidazole-4-carboxamide isomerase (242 aa).

Residue Asp-8 is the Proton acceptor of the active site. Catalysis depends on Asp-129, which acts as the Proton donor.

It belongs to the HisA/HisF family.

It localises to the cytoplasm. It carries out the reaction 1-(5-phospho-beta-D-ribosyl)-5-[(5-phospho-beta-D-ribosylamino)methylideneamino]imidazole-4-carboxamide = 5-[(5-phospho-1-deoxy-D-ribulos-1-ylimino)methylamino]-1-(5-phospho-beta-D-ribosyl)imidazole-4-carboxamide. The protein operates within amino-acid biosynthesis; L-histidine biosynthesis; L-histidine from 5-phospho-alpha-D-ribose 1-diphosphate: step 4/9. The protein is 1-(5-phosphoribosyl)-5-[(5-phosphoribosylamino)methylideneamino] imidazole-4-carboxamide isomerase of Beijerinckia indica subsp. indica (strain ATCC 9039 / DSM 1715 / NCIMB 8712).